The sequence spans 696 residues: Polyphosphate kinase (696 aa).

Asn-45 is a binding site for ATP. Residues Arg-373 and Arg-403 each contribute to the Mg(2+) site. One can recognise a PLD phosphodiesterase domain in the interval 428-462; sequence PGLKIHSKLLMISRREGDDIIRYAHIGTGNFHEKT. His-433 functions as the Phosphohistidine intermediate in the catalytic mechanism. ATP is bound by residues Tyr-466, Arg-562, and His-590.

This sequence belongs to the polyphosphate kinase 1 (PPK1) family. It depends on Mg(2+) as a cofactor. In terms of processing, an intermediate of this reaction is the autophosphorylated ppk in which a phosphate is covalently linked to a histidine residue through a N-P bond.

It carries out the reaction [phosphate](n) + ATP = [phosphate](n+1) + ADP. Its function is as follows. Catalyzes the reversible transfer of the terminal phosphate of ATP to form a long-chain polyphosphate (polyP). The chain is Polyphosphate kinase from Vibrio parahaemolyticus serotype O3:K6 (strain RIMD 2210633).